We begin with the raw amino-acid sequence, 442 residues long: Protein translocase subunit SecF (442 aa).

The segment at 1–39 is disordered; sequence MASKAKTGRDDEATSAVELTEATESAVARTDGDSTTDTA. 6 helical membrane-spanning segments follow: residues 67–87, 187–207, 218–238, 243–263, 301–321, and 331–351; these read WFGV…FRGF, ITKK…LYIT, AITA…LVGF, ATVI…VIVF, LIGV…LGVG, and LIGI…LLVT. The tract at residues 366 to 442 is disordered; it reads VLKRRNSGSP…PTGKRNAGRR (77 aa). A compositionally biased stretch (low complexity) spans 402 to 432; that stretch reads QASSQSAPRAAQGSSKPAPGARPVRPVGTRR. The span at 433–442 shows a compositional bias: basic residues; it reads PTGKRNAGRR.

The protein belongs to the SecD/SecF family. SecF subfamily. As to quaternary structure, forms a complex with SecD. Part of the essential Sec protein translocation apparatus which comprises SecA, SecYEG and auxiliary proteins SecDF. Other proteins may also be involved.

Its subcellular location is the cell membrane. In terms of biological role, part of the Sec protein translocase complex. Interacts with the SecYEG preprotein conducting channel. SecDF uses the proton motive force (PMF) to complete protein translocation after the ATP-dependent function of SecA. This chain is Protein translocase subunit SecF, found in Mycobacterium tuberculosis (strain ATCC 25618 / H37Rv).